The chain runs to 197 residues: Imidazoleglycerol-phosphate dehydratase (197 aa).

This sequence belongs to the imidazoleglycerol-phosphate dehydratase family.

The protein resides in the cytoplasm. The catalysed reaction is D-erythro-1-(imidazol-4-yl)glycerol 3-phosphate = 3-(imidazol-4-yl)-2-oxopropyl phosphate + H2O. The protein operates within amino-acid biosynthesis; L-histidine biosynthesis; L-histidine from 5-phospho-alpha-D-ribose 1-diphosphate: step 6/9. The sequence is that of Imidazoleglycerol-phosphate dehydratase from Pseudomonas fluorescens (strain SBW25).